The primary structure comprises 701 residues: Elongation factor G (701 aa).

The 283-residue stretch at 8-290 folds into the tr-type G domain; that stretch reads SLYRNIGISA…AVVELLPAPT (283 aa). Residues 17–24, 88–92, and 142–145 each bind GTP; these read AHIDAGKT, DTPGH, and NKMD.

This sequence belongs to the TRAFAC class translation factor GTPase superfamily. Classic translation factor GTPase family. EF-G/EF-2 subfamily.

It localises to the cytoplasm. Catalyzes the GTP-dependent ribosomal translocation step during translation elongation. During this step, the ribosome changes from the pre-translocational (PRE) to the post-translocational (POST) state as the newly formed A-site-bound peptidyl-tRNA and P-site-bound deacylated tRNA move to the P and E sites, respectively. Catalyzes the coordinated movement of the two tRNA molecules, the mRNA and conformational changes in the ribosome. This chain is Elongation factor G, found in Neisseria meningitidis serogroup C (strain 053442).